The sequence spans 201 residues: Desiccation-related protein PCC3-06 (201 aa).

The segment covering 41–54 (TVASQSQGRQQVSE) has biased composition (polar residues). Disordered regions lie at residues 41 to 155 (TVAS…QNVK) and 177 to 201 (MGKS…TNYF). Composition is skewed to basic and acidic residues over residues 57 to 76 (EDAK…KTSE), 108 to 144 (GELK…ERVA), and 177 to 193 (MGKS…ETKK).

The protein belongs to the LEA type 1 family.

In Craterostigma plantagineum (Blue gem), this protein is Desiccation-related protein PCC3-06.